The chain runs to 251 residues: MRKPIIAGNWKMNKTLSEAVSFVEEVKGQIPAASAVDAVVCSPALFLERLVAATEGTDLQVGAQNMHFEKNGAFTGEISPVALSDLKVGYVVLGHSERREMFAETDESVNKKTIAAFEHGLTPIVCCGETLEERESGKTFDLVAGQVTKALAGLTEEQVKATVIAYEPIWAIGTGKSSSSADANEVCAHIRKVVAEVVSPAAAEAVRIQYGGSVKPENIKEYMAQSDIDGALVGGASLEPASFLGLLGAVK.

9-11 (NWK) provides a ligand contact to substrate. Residue His95 is the Electrophile of the active site. Glu167 functions as the Proton acceptor in the catalytic mechanism. Substrate is bound by residues Gly173, Ser213, and 234-235 (GG). The residue at position 213 (Ser213) is a Phosphoserine.

Belongs to the triosephosphate isomerase family. In terms of assembly, homodimer.

The protein resides in the cytoplasm. The catalysed reaction is D-glyceraldehyde 3-phosphate = dihydroxyacetone phosphate. It functions in the pathway carbohydrate biosynthesis; gluconeogenesis. Its pathway is carbohydrate degradation; glycolysis; D-glyceraldehyde 3-phosphate from glycerone phosphate: step 1/1. Its function is as follows. Involved in the gluconeogenesis. Catalyzes stereospecifically the conversion of dihydroxyacetone phosphate (DHAP) to D-glyceraldehyde-3-phosphate (G3P). The protein is Triosephosphate isomerase of Bacillus anthracis.